A 471-amino-acid chain; its full sequence is Serine/threonine-protein kinase AtPK2/AtPK19 (471 aa).

The interval 1–21 is disordered; that stretch reads MVSSQCSVANKNQTGKPFQKH. Residues 140–395 form the Protein kinase domain; it reads FEVLKVVGQG…AEEIKKHKWF (256 aa). ATP is bound by residues 146 to 154 and Lys169; that span reads VGQGAFGKV. Asp263 functions as the Proton acceptor in the catalytic mechanism. The segment at 281–307 is activation loop; sequence DFGLAKEFEENTRSNSMCGTTEYMAPE. Ser296 is modified (phosphoserine; by PDPK1). Residues 396 to 466 enclose the AGC-kinase C-terminal domain; that stretch reads KAINWKKLEA…VRPPHSFLHR (71 aa). Thr455 bears the Phosphothreonine; by TOR mark.

It belongs to the protein kinase superfamily. AGC Ser/Thr protein kinase family. S6 kinase subfamily. In terms of assembly, interacts with TAP46. Binds to MRF1. Post-translationally, undergoes serine-specific autophosphorylation. Phosphorylated at Thr-455 by TOR.

It carries out the reaction L-seryl-[protein] + ATP = O-phospho-L-seryl-[protein] + ADP + H(+). The catalysed reaction is L-threonyl-[protein] + ATP = O-phospho-L-threonyl-[protein] + ADP + H(+). With respect to regulation, activated by PDK1. Its function is as follows. Downstream effector of TOR signaling pathway. May be involved in adaptation of plant to cold or high-salt conditions. Mediates the phosphorylation of MRFs (e.g. MRF1). This is Serine/threonine-protein kinase AtPK2/AtPK19 (ATPK2) from Arabidopsis thaliana (Mouse-ear cress).